The primary structure comprises 725 residues: Prolyl 3-hydroxylase 1 (725 aa).

The signal sequence occupies residues 1-14; the sequence is MALLLPLLPLLVWA. The TPR 1 repeat unit spans residues 36 to 69; the sequence is PDALFAAGAEAYARGDWPAVVLQMERALRARAAI. Residue N82 is glycosylated (N-linked (GlcNAc...) asparagine). TPR repeat units lie at residues 136–169, 198–231, and 294–327; these read RSPY…NPEH, HMTE…YFVA, and PSHF…FPND. Positions 394-441 form a coiled coil; the sequence is KRLREKQKVERETAARISEEIGNLMKEIETLVEEKAKESAEMSKFIRE. 2 N-linked (GlcNAc...) asparagine glycosylation sites follow: N460 and N533. One can recognise a Fe2OG dioxygenase domain in the interval 557–671; it reads SHLVCRTAID…RCAIALWFTL (115 aa). Fe cation-binding residues include H580, D582, and H652. R662 is an active-site residue. The span at 701 to 715 shows a compositional bias: polar residues; the sequence is ETSAEQEPTAATSTA. Residues 701-725 form a disordered region; it reads ETSAEQEPTAATSTAGLHAAGKDEL. The Prevents secretion from ER motif lies at 722 to 725; it reads KDEL.

Belongs to the leprecan family. In terms of assembly, binds unfolded collagen in a complex with CYPB and CRTAP. The cofactor is Fe cation. L-ascorbate serves as cofactor. As to expression, expressed in embryonic dermis, tendon, cartilage, liver and kidney. Expression in the kidney is restricted to the calyx. In the liver, expression is restricted to the interlobular septum.

It is found in the endoplasmic reticulum. The catalysed reaction is L-prolyl-[collagen] + 2-oxoglutarate + O2 = trans-3-hydroxy-L-prolyl-[collagen] + succinate + CO2. Has prolyl 3-hydroxylase activity catalyzing the post-translational formation of 3-hydroxyproline in -Xaa-Pro-Gly-sequences in collagens, especially types IV and V. May be involved in the secretoty pathway of cells. Has growth suppressive activity in fibroblasts. The polypeptide is Prolyl 3-hydroxylase 1 (Gallus gallus (Chicken)).